Here is a 186-residue protein sequence, read N- to C-terminus: Negative modulator of initiation of replication (186 aa).

It belongs to the SeqA family. Homodimer. Polymerizes to form helical filaments.

Its subcellular location is the cytoplasm. Its function is as follows. Negative regulator of replication initiation, which contributes to regulation of DNA replication and ensures that replication initiation occurs exactly once per chromosome per cell cycle. Binds to pairs of hemimethylated GATC sequences in the oriC region, thus preventing assembly of replication proteins and re-initiation at newly replicated origins. Repression is relieved when the region becomes fully methylated. This is Negative modulator of initiation of replication from Glaesserella parasuis serovar 5 (strain SH0165) (Haemophilus parasuis).